We begin with the raw amino-acid sequence, 178 residues long: Bifunctional protein PyrR (178 aa).

The PRPP-binding signature appears at 99-111; the sequence is VVLVDDVIYTGRT.

Belongs to the purine/pyrimidine phosphoribosyltransferase family. PyrR subfamily. As to quaternary structure, homodimer and homohexamer; in equilibrium.

It carries out the reaction UMP + diphosphate = 5-phospho-alpha-D-ribose 1-diphosphate + uracil. In terms of biological role, regulates transcriptional attenuation of the pyrimidine nucleotide (pyr) operon by binding in a uridine-dependent manner to specific sites on pyr mRNA. This disrupts an antiterminator hairpin in the RNA and favors formation of a downstream transcription terminator, leading to a reduced expression of downstream genes. Also displays a weak uracil phosphoribosyltransferase activity which is not physiologically significant. This is Bifunctional protein PyrR from Thermoanaerobacter pseudethanolicus (strain ATCC 33223 / 39E) (Clostridium thermohydrosulfuricum).